The sequence spans 333 residues: MFWPTKKDLKTAMEVFALFQWALSALVIVTTVIIVNLYLVVFTSYWPVTVLMLTWLAFDWKTPERGGRRFTCVRKWRLWKHYSDYFPLKMVKTKDISPDRNYILVCHPHGLMAHSCFGHFATDTTGFSKTFPGITPYMLTLGAFFWVPFLRDYVMSTGSCSVSRSSMDFLLTQKGTGNMLVVVVGGLAECRYSTPGSTTLFLKKRQGFVRTALKHGVSLIPAYAFGETDLYDQHIFTPGGFVNRFQKWFQKMVHIYPCAFYGRGLTKNSWGLLPYSQPVTTVVGEPLPLPKIENPSEEIVAKYHTLYIDALRKLFDQHKTKFGISETQELVIV.

3 helical membrane-spanning segments follow: residues 15-35, 38-58, and 130-150; these read VFAL…VIIV, YLVV…WLAF, and TFPG…VPFL.

The protein belongs to the diacylglycerol acyltransferase family. Monomer. As to expression, expressed in Mueller cells of the retina (at protein level). Abundant in tissues rich in sebaceous glands such as the preputial gland and eyelid.

It localises to the endoplasmic reticulum membrane. It catalyses the reaction a long chain fatty alcohol + a fatty acyl-CoA = a wax ester + CoA. The catalysed reaction is all-trans-retinol + an acyl-CoA = an all-trans-retinyl ester + CoA. It carries out the reaction an acyl-CoA + a 1,2-diacyl-sn-glycerol = a triacyl-sn-glycerol + CoA. The enzyme catalyses 9-cis-retinol + a fatty acyl-CoA = 9-cis-retinyl ester + CoA. It catalyses the reaction 11-cis-retinol + a fatty acyl-CoA = 11-cis-retinyl ester + CoA. The catalysed reaction is 13-cis-retinol + a fatty acyl-CoA = 13-cis-retinyl ester + CoA. It carries out the reaction a 1-acylglycerol + an acyl-CoA = a 1,2-diacylglycerol + CoA. The enzyme catalyses 1-O-alkylglycerol + an acyl-CoA = 1-O-alkyl-3-acylglycerol + CoA. It catalyses the reaction a 2-acylglycerol + an acyl-CoA = a 1,2-diacyl-sn-glycerol + CoA. The catalysed reaction is 2-(9Z-octadecenoyl)-glycerol + hexadecanoyl-CoA = 1-hexadecanoyl-2-(9Z-octadecenoyl)-sn-glycerol + CoA. It carries out the reaction 1,2-di-(9Z-octadecenoyl)-sn-glycerol + hexadecanoyl-CoA = 1,2-di-(9Z)-octadecenoyl-3-hexadecanoyl-sn-glycerol + CoA. The enzyme catalyses hexadecan-1-ol + hexadecanoyl-CoA = hexadecanyl hexadecanoate + CoA. It catalyses the reaction hexadecane-1,2-diol + hexadecanoyl-CoA = 2-hydroxyhexadecyl hexadecanoate + CoA. The catalysed reaction is all-trans-retinol + hexadecanoyl-CoA = all-trans-retinyl hexadecanoate + CoA. It carries out the reaction 1,2-di-(9Z-octadecenoyl)-sn-glycerol + (9Z)-octadecenoyl-CoA = 1,2,3-tri-(9Z-octadecenoyl)-glycerol + CoA. The enzyme catalyses hexadecan-1-ol + (9Z)-octadecenoyl-CoA = hexadecanyl (9Z)-octadecenoate + CoA. It catalyses the reaction (9Z)-hexadecen-1-ol + (9Z)-octadecenoyl-CoA = 1-O-(9Z)-hexadecenyl (9Z)-octadecenoate + CoA. The catalysed reaction is octadecan-1-ol + (9Z)-octadecenoyl-CoA = 1-O-octadecyl (9Z)-octadecenoate + CoA. It carries out the reaction (9Z)-octadecen-1-ol + (9Z)-octadecenoyl-CoA = 1-O-(9Z)-octadecenyl (9Z)-octadecenoate + CoA. The enzyme catalyses hexadecan-1-ol + (9Z)-hexadecenoyl-CoA = 1-O-hexadecyl (9Z)-hexadecenoate + CoA. It catalyses the reaction hexadecan-1-ol + octadecanoyl-CoA = hexadecanyl octadecanoate + CoA. The catalysed reaction is 11-cis-retinol + hexadecanoyl-CoA = 11-cis-retinyl hexadecanoate + CoA. It carries out the reaction 1-O-(9Z-octadecenyl)-glycerol + (9Z)-octadecenoyl-CoA = 1-O-(9Z-octadecyl)-3-(9Z-octadecenoyl)-glycerol + CoA. The enzyme catalyses 1-(9Z-octadecenoyl)-glycerol + (9Z)-octadecenoyl-CoA = 1,2-di-(9Z-octadecenoyl)-glycerol + CoA. It catalyses the reaction 11-cis-retinol + tetradecanoyl-CoA = 11-cis-retinyl tetradecanoate + CoA. The catalysed reaction is 9-cis-retinol + tetradecanoyl-CoA = 9-cis-retinyl tetradecanoate + CoA. It carries out the reaction 9-cis-retinol + hexadecanoyl-CoA = 9-cis-retinyl hexadecanoate + CoA. The enzyme catalyses 13-cis-retinol + tetradecanoyl-CoA = 13-cis-retinyl tetradecanoate + CoA. It catalyses the reaction all-trans-retinol + tetradecanoyl-CoA = all-trans-retinyl tetradecanoate + CoA. The catalysed reaction is tetradecan-1-ol + tetradecanoyl-CoA = tetradecanyl tetradecanoate + CoA. 11-cis retinoids act as allosteric modulators of acyl-CoA retinol O-fatty-acyltransferase (ARAT) activity by suppressing esterification of 9-cis, 13-cis, or all-trans retinols concurrently increasing the enzyme specificity toward 11-cis isomer. Acyltransferase that catalyzes the formation of ester bonds between fatty alcohols and fatty acyl-CoAs to form wax monoesters. Shows a preference for medium chain acyl-CoAs from C12 to C16 in length and fatty alcohols shorter than C20, as the acyl donor and acceptor, respectively. Also possesses fatty acyl-CoA retinol acyltransferase (ARAT) activity that preferentially esterifies 11-cis-retinol, a chromophore precursor of bleached opsin pigments in cone cells. Shows higher catalytic efficiency toward 11-cis-retinol versus 9-cis-retinol, 13- cis-retinol and all-trans-retinol substrates. This is Acyl-CoA wax alcohol acyltransferase 2 (Awat2) from Mus musculus (Mouse).